The following is a 336-amino-acid chain: MATIKDVAKLAGVSTTTVSHVINKTRFVAEDTSKAVWDAIQQLNYSPSAVARSLKVNTTKSIGMIITTSEAPYFAEIVLAVEEHCYQQGYSLFLCNTQNEPEKIQNHLDMLIKKRVDGVLVMCSEYTRDSLELFNGTNIPMVVMDWGKADDHSDRILDNSFEGGYLATQHLIENGHKDIGVIAGHLSKTLSKERYEGFLKAMHEANLPVRQEWIYEGDFEPESGFEQMNNLLRLEKLPTAIFCFSDTIALGAISALSEKGLSVPSYMSIIGYDNIHSSRFYSPPLTTIHQSKSRLGVKALNILLERIKIDKTQYQPQTIEFHPELVLRRSVRNLNK.

An HTH lacI-type domain is found at Ala2–Val56. A DNA-binding region (H-T-H motif) is located at residues Ile4–Asn23. The DNA-binding element occupies Ser48 to Val56. 4 residues coordinate hypoxanthine: Tyr73, Lys188, Phe219, and Asp273.

As to quaternary structure, homodimer.

It participates in purine metabolism; purine nucleotide biosynthesis [regulation]. In terms of biological role, is the main repressor of the genes involved in the de novo synthesis of purine nucleotides, regulating purB, purC, purEK, purF, purHD, purL, purMN and guaBA expression. PurR is allosterically activated to bind its cognate DNA by binding the purine corepressors, hypoxanthine or guanine, thereby effecting transcription repression. This Actinobacillus pleuropneumoniae serotype 5b (strain L20) protein is HTH-type transcriptional repressor PurR.